The chain runs to 215 residues: Large ribosomal subunit protein uL4 (215 aa).

The segment at 46-76 (TAKSKNRAEVSGGGRKPWAQKGGGRARAGSI) is disordered. Gly residues predominate over residues 56–71 (SGGGRKPWAQKGGGRA).

It belongs to the universal ribosomal protein uL4 family. Part of the 50S ribosomal subunit.

Functionally, one of the primary rRNA binding proteins, this protein initially binds near the 5'-end of the 23S rRNA. It is important during the early stages of 50S assembly. It makes multiple contacts with different domains of the 23S rRNA in the assembled 50S subunit and ribosome. In terms of biological role, forms part of the polypeptide exit tunnel. In Helicobacter pylori (strain HPAG1), this protein is Large ribosomal subunit protein uL4.